A 154-amino-acid chain; its full sequence is Crossover junction endodeoxyribonuclease RuvC (154 aa).

Residues D7, E66, and D139 contribute to the active site. D7, E66, and D139 together coordinate Mg(2+).

This sequence belongs to the RuvC family. As to quaternary structure, homodimer which binds Holliday junction (HJ) DNA. The HJ becomes 2-fold symmetrical on binding to RuvC with unstacked arms; it has a different conformation from HJ DNA in complex with RuvA. In the full resolvosome a probable DNA-RuvA(4)-RuvB(12)-RuvC(2) complex forms which resolves the HJ. The cofactor is Mg(2+).

Its subcellular location is the cytoplasm. The catalysed reaction is Endonucleolytic cleavage at a junction such as a reciprocal single-stranded crossover between two homologous DNA duplexes (Holliday junction).. The RuvA-RuvB-RuvC complex processes Holliday junction (HJ) DNA during genetic recombination and DNA repair. Endonuclease that resolves HJ intermediates. Cleaves cruciform DNA by making single-stranded nicks across the HJ at symmetrical positions within the homologous arms, yielding a 5'-phosphate and a 3'-hydroxyl group; requires a central core of homology in the junction. The consensus cleavage sequence is 5'-(A/T)TT(C/G)-3'. Cleavage occurs on the 3'-side of the TT dinucleotide at the point of strand exchange. HJ branch migration catalyzed by RuvA-RuvB allows RuvC to scan DNA until it finds its consensus sequence, where it cleaves and resolves the cruciform DNA. This chain is Crossover junction endodeoxyribonuclease RuvC, found in Aliarcobacter butzleri (strain RM4018) (Arcobacter butzleri).